The chain runs to 239 residues: 1-(5-phosphoribosyl)-5-[(5-phosphoribosylamino)methylideneamino] imidazole-4-carboxamide isomerase (239 aa).

The active-site Proton acceptor is Asp-8. Asp-129 (proton donor) is an active-site residue.

Belongs to the HisA/HisF family.

Its subcellular location is the cytoplasm. It catalyses the reaction 1-(5-phospho-beta-D-ribosyl)-5-[(5-phospho-beta-D-ribosylamino)methylideneamino]imidazole-4-carboxamide = 5-[(5-phospho-1-deoxy-D-ribulos-1-ylimino)methylamino]-1-(5-phospho-beta-D-ribosyl)imidazole-4-carboxamide. It functions in the pathway amino-acid biosynthesis; L-histidine biosynthesis; L-histidine from 5-phospho-alpha-D-ribose 1-diphosphate: step 4/9. In Bacillus thuringiensis subsp. konkukian (strain 97-27), this protein is 1-(5-phosphoribosyl)-5-[(5-phosphoribosylamino)methylideneamino] imidazole-4-carboxamide isomerase.